Reading from the N-terminus, the 313-residue chain is 2-oxoglutarate-dependent dioxygenase eupC (313 aa).

The region spanning 187–284 (PSIPMRFLHY…LNAKALDGSG (98 aa)) is the Fe2OG dioxygenase domain. The Fe cation site is built by His212, Asp214, and His263. 2-oxoglutarate is bound at residue Lys274.

This sequence belongs to the iron/ascorbate-dependent oxidoreductase family. Fe(2+) is required as a cofactor.

It functions in the pathway secondary metabolite biosynthesis; terpenoid biosynthesis. 2-oxoglutarate-dependent dioxygenase; part of the gene cluster that mediates the biosynthesis of eupenifeldin, a bistropolone meroterpenoid that acts as an antitumor agent. The first step of eupenifeldin biosynthesis is the biosynthesis of 3-methylorcinaldehyde performed by the non-reducing polyketide synthase eupA. Oxidative dearomatization of 3-methylorcinaldehyde likely catalyzed by the FAD-dependent monooxygenase eupB is followed by oxidative ring expansion by the 2-oxoglutarate-dependent dioxygenase eupC to provide the first tropolone metabolite, tropolone stipitaldehyde. In parallel, generation of sesquiterpene alpha-humulene from farnesylpyrophosphate (FPP) is catalyzed by the terpene cyclase eupE. The cytochrome P450 monooxygenase eupD then hydroxylates humulene to humulenol. The putative Diels-Alderase eupF probably catalyzes the formation of the tropolone-humulene skeleton by linking humulenol and the polyketide moiety. The short-chain dehydrogenase/reductase eupG and the flavin-dependent monooxygenase eupH are also essential for eupenifeldin biosynthesis and are likely the additional decorating enzymes of the tropolone-humulene skeleton to produce final eupenifeldin or derivatives. This chain is 2-oxoglutarate-dependent dioxygenase eupC, found in Phoma sp.